The following is a 357-amino-acid chain: Biotin synthase (357 aa).

The Radical SAM core domain occupies 41–268 (NEVQISRLLS…KSRVRLSAGR (228 aa)). The [4Fe-4S] cluster site is built by Cys56, Cys60, and Cys63. [2Fe-2S] cluster is bound by residues Cys100, Cys131, Cys191, and Arg263.

Belongs to the radical SAM superfamily. Biotin synthase family. In terms of assembly, homodimer. It depends on [4Fe-4S] cluster as a cofactor. [2Fe-2S] cluster is required as a cofactor.

It carries out the reaction (4R,5S)-dethiobiotin + (sulfur carrier)-SH + 2 reduced [2Fe-2S]-[ferredoxin] + 2 S-adenosyl-L-methionine = (sulfur carrier)-H + biotin + 2 5'-deoxyadenosine + 2 L-methionine + 2 oxidized [2Fe-2S]-[ferredoxin]. It functions in the pathway cofactor biosynthesis; biotin biosynthesis; biotin from 7,8-diaminononanoate: step 2/2. Catalyzes the conversion of dethiobiotin (DTB) to biotin by the insertion of a sulfur atom into dethiobiotin via a radical-based mechanism. The chain is Biotin synthase from Shewanella denitrificans (strain OS217 / ATCC BAA-1090 / DSM 15013).